Reading from the N-terminus, the 155-residue chain is MQKHIVKDLELLAANAAAKEGFEIIRLEVLAQMKPMKIQLQIRHKNGSDVSLEDCSRLSRPIGEVIENSKLINQSYILEISSPGLSDILETDKEFATFKGFPIQVSTKNKSNSTILQNGLLHTKSKEHLLINIKGKMSKIPIDNVIQVRLASPTD.

It belongs to the RimP family.

It localises to the cytoplasm. Required for maturation of 30S ribosomal subunits. The protein is Ribosome maturation factor RimP of Prochlorococcus marinus (strain SARG / CCMP1375 / SS120).